The primary structure comprises 882 residues: Envelope glycoprotein gp160 (882 aa).

A signal peptide spans 1–22 (MGCLGNQLLIAILLLSVYGIYC). Residues 23–697 (IQYVTVFYGV…TSWIKYIQYG (675 aa)) lie on the Extracellular side of the membrane. A glycan (N-linked (GlcNAc...) asparagine; by host) is linked at Asn37. A disulfide bond links Cys44 and Cys57. Asn70, Asn114, Asn149, Asn159, Asn174, Asn187, Asn201, Asn205, Asn215, Asn247, Asn250, Asn257, Asn281, Asn287, Asn298, Asn309, Asn319, Asn374, and Asn380 each carry an N-linked (GlcNAc...) asparagine; by host glycan. Intrachain disulfides connect Cys101–Cys223, Cys108–Cys214, Cys113–Cys171, Cys236–Cys266, and Cys246–Cys258. A V1 region spans residues 113–170 (CNKSETDKWGLTKSSTTTASTTTTTTAKSVETRDIVNETSPCVVHDNCTGLEQEPMIS). The segment at 171 to 214 (CKFNMTGLKRDKKKEYNETWYSADLVCEQGNSTGNESRCYMNHC) is V2. The interval 314 to 346 (CRRPGNKTVLPVTIMSALVFHSQPVNERPKQAW) is V3. Cysteines 314 and 347 form a disulfide. Intrachain disulfides connect Cys398–Cys462 and Cys405–Cys435. Positions 405–435 (CKMNWFLNWVEDRSLTTQKPKERHKRNYVPC) are V4. Residues Asn463, Asn474, and Asn479 are each glycosylated (N-linked (GlcNAc...) asparagine; by host). The segment at 478 to 485 (GNQTSITM) is V5. The fusion peptide stretch occupies residues 529-549 (GVFVLGFLGFLATAGSAMGAA). Residues 592-608 (LQTRVSAIEKYLKDQAQ) are immunosuppression. Asn628, Asn637, and Asn653 each carry an N-linked (GlcNAc...) asparagine; by host glycan. Residues 637–669 (NETWQEWERKVDFLEANITALLEEAQIQQEKNM) are a coiled coil. Residues 674–695 (KLNSWDVFGNWFDLTSWIKYIQ) are MPER; binding to GalCer. Residues 698–718 (IYIIVGVILLRIVIYIVQMLA) form a helical membrane-spanning segment. At 719–882 (RLRQGYRPVF…IRQGLELTLL (164 aa)) the chain is on the cytoplasmic side. A YXXV motif; contains endocytosis signal motif is present at residues 724-727 (YRPV). The interval 738–761 (THTQQDPALPTKEGKKGDGGGSGG) is disordered. A lipid anchor (S-palmitoyl cysteine; by host) is attached at Cys790. A Di-leucine internalization motif motif is present at residues 881–882 (LL).

In terms of assembly, the mature envelope protein (Env) consists of a homotrimer of non-covalently associated gp120-gp41 heterodimers. The resulting complex protrudes from the virus surface as a spike. Interacts with host CD4 and CCR5. Gp120 also interacts with the C-type lectins CD209/DC-SIGN and CLEC4M/DC-SIGNR (collectively referred to as DC-SIGN(R)). The mature envelope protein (Env) consists of a homotrimer of non-covalently associated gp120-gp41 heterodimers. The resulting complex protrudes from the virus surface as a spike. In terms of processing, specific enzymatic cleavages in vivo yield mature proteins. Envelope glycoproteins are synthesized as an inactive precursor that is heavily N-glycosylated and processed likely by host cell furin in the Golgi to yield the mature SU and TM proteins. The cleavage site between SU and TM requires the minimal sequence [KR]-X-[KR]-R. Palmitoylation of the transmembrane protein and of Env polyprotein (prior to its proteolytic cleavage) is essential for their association with host cell membrane lipid rafts. Palmitoylation is therefore required for envelope trafficking to classical lipid rafts, but not for viral replication.

It localises to the virion membrane. It is found in the host cell membrane. The protein localises to the host endosome membrane. The surface protein gp120 (SU) attaches the virus to the host lymphoid cell by binding to the primary receptor CD4. This interaction induces a structural rearrangement creating a high affinity binding site for a chemokine coreceptor like CCR5. This peculiar 2 stage receptor-interaction strategy allows gp120 to maintain the highly conserved coreceptor-binding site in a cryptic conformation, protected from neutralizing antibodies. These changes are transmitted to the transmembrane protein gp41 and are thought to activate its fusogenic potential by unmasking its fusion peptide. In terms of biological role, surface protein gp120 (SU) may target the virus to gut-associated lymphoid tissue (GALT) by binding host ITGA4/ITGB7 (alpha-4/beta-7 integrins), a complex that mediates T-cell migration to the GALT. Interaction between gp120 and ITGA4/ITGB7 would allow the virus to enter GALT early in the infection, infecting and killing most of GALT's resting CD4+ T-cells. This T-cell depletion is believed to be the major insult to the host immune system leading to AIDS. Its function is as follows. The surface protein gp120 is a ligand for CD209/DC-SIGN and CLEC4M/DC-SIGNR, which are respectively found on dendritic cells (DCs), and on endothelial cells of liver sinusoids and lymph node sinuses. These interactions allow capture of viral particles at mucosal surfaces by these cells and subsequent transmission to permissive cells. DCs are professional antigen presenting cells, critical for host immunity by inducing specific immune responses against a broad variety of pathogens. They act as sentinels in various tissues where they take up antigen, process it, and present it to T-cells following migration to lymphoid organs. SIV subverts the migration properties of dendritic cells to gain access to CD4+ T-cells in lymph nodes. Virus transmission to permissive T-cells occurs either in trans (without DCs infection, through viral capture and transmission), or in cis (following DCs productive infection, through the usual CD4-gp120 interaction), thereby inducing a robust infection. In trans infection, bound virions remain infectious over days and it is proposed that they are not degraded, but protected in non-lysosomal acidic organelles within the DCs close to the cell membrane thus contributing to the viral infectious potential during DCs' migration from the periphery to the lymphoid tissues. On arrival at lymphoid tissues, intact virions recycle back to DCs' cell surface allowing virus transmission to CD4+ T-cells. Virion capture also seems to lead to MHC-II-restricted viral antigen presentation, and probably to the activation of SIV-specific CD4+ cells. Functionally, the transmembrane protein gp41 (TM) acts as a class I viral fusion protein. Under the current model, the protein has at least 3 conformational states: pre-fusion native state, pre-hairpin intermediate state, and post-fusion hairpin state. During fusion of viral and target intracellular membranes, the coiled coil regions (heptad repeats) assume a trimer-of-hairpins structure, positioning the fusion peptide in close proximity to the C-terminal region of the ectodomain. The formation of this structure appears to drive apposition and subsequent fusion of viral and target cell membranes. Complete fusion occurs in host cell endosomes. The virus undergoes clathrin-dependent internalization long before endosomal fusion, thus minimizing the surface exposure of conserved viral epitopes during fusion and reducing the efficacy of inhibitors targeting these epitopes. Membranes fusion leads to delivery of the nucleocapsid into the cytoplasm. The envelope glycoprotein gp160 precursor down-modulates cell surface CD4 antigen by interacting with it in the endoplasmic reticulum and blocking its transport to the cell surface. In terms of biological role, the gp120-gp41 heterodimer allows rapid transcytosis of the virus through CD4 negative cells such as simple epithelial monolayers of the intestinal, rectal and endocervical epithelial barriers. Both gp120 and gp41 specifically recognize glycosphingolipids galactosyl-ceramide (GalCer) or 3' sulfo-galactosyl-ceramide (GalS) present in the lipid rafts structures of epithelial cells. Binding to these alternative receptors allows the rapid transcytosis of the virus through the epithelial cells. This transcytotic vesicle-mediated transport of virions from the apical side to the basolateral side of the epithelial cells does not involve infection of the cells themselves. This Simian immunodeficiency virus (isolate Mm142-83) (SIV-mac) protein is Envelope glycoprotein gp160 (env).